We begin with the raw amino-acid sequence, 258 residues long: SMH class II histocompatibility antigen, beta-1 chain (258 aa).

Residues 1–29 (MMVLPVPVAPWTAALTVLLMVLNKSVVQG) form the signal peptide. Residues 30–121 (RTTPENYLFR…LNQRLSQSLI (92 aa)) form a beta-1 region. Topologically, residues 30–225 (RTTPENYLFR…RAQSDSARNK (196 aa)) are extracellular. 2 cysteine pairs are disulfide-bonded: Cys44–Cys106 and Cys144–Cys200. The interval 122–215 (AQPKVHVSPS…SLDRPITVEW (94 aa)) is beta-2. The Ig-like C1-type domain maps to 124–212 (PKVHVSPSKG…EHPSLDRPIT (89 aa)). A connecting peptide region spans residues 216–225 (RAQSDSARNK). N-linked (GlcNAc...) asparagine glycosylation occurs at Asn224. The chain crosses the membrane as a helical span at residues 226 to 246 (TLTGVGGLVLGLIFLAVGLIM). Topologically, residues 247 to 258 (HVRSKKAQRGSR) are cytoplasmic.

This sequence belongs to the MHC class II family.

It localises to the membrane. This Spalax ehrenbergi (Middle East blind mole rat) protein is SMH class II histocompatibility antigen, beta-1 chain.